Here is a 254-residue protein sequence, read N- to C-terminus: Protein EFFECTOR OF TRANSCRIPTION 3 (254 aa).

The GIY-YIG domain occupies 103 to 152 (RCTGLYELGVGVIGQDQGQNFDPDNNVLGVYVGQCVDVKSRLQDYGRRGG).

Its subcellular location is the cytoplasm. The sequence is that of Protein EFFECTOR OF TRANSCRIPTION 3 from Arabidopsis thaliana (Mouse-ear cress).